The following is a 221-amino-acid chain: MIIAIDGPSASGKSSIARELGVRLNYKFISSGHLYRIITLIAQRSLMNSCDFISEDSLLNLILENDISFNNFAFLLNGENVENQILNDKIDFQVSFYSSYVGIRNIVNKKLREVVKFSDDNYIIEGRDITTVVFPESEFKIYLDASVKVRALRRYKQRNGNETLEELERTLKRRDDVDKKKQYGKLKLSKGVFYLDTSYKGLDDVCNIIIEKFNLKKVRER.

7-15 (GPSASGKSS) provides a ligand contact to ATP.

The protein belongs to the cytidylate kinase family. Type 1 subfamily.

Its subcellular location is the cytoplasm. The enzyme catalyses CMP + ATP = CDP + ADP. It carries out the reaction dCMP + ATP = dCDP + ADP. The chain is Cytidylate kinase 1 from Borreliella burgdorferi (strain ATCC 35210 / DSM 4680 / CIP 102532 / B31) (Borrelia burgdorferi).